The chain runs to 377 residues: Queuine tRNA-ribosyltransferase (377 aa).

Aspartate 89 serves as the catalytic Proton acceptor. Residues 89–93 (DSGGF), aspartate 143, glutamine 188, and glycine 215 each bind substrate. The RNA binding stretch occupies residues 246 to 252 (GVGKPED). Aspartate 265 functions as the Nucleophile in the catalytic mechanism. Residues 270–274 (TRNAR) are RNA binding; important for wobble base 34 recognition. Zn(2+) contacts are provided by cysteine 303, cysteine 305, cysteine 308, and histidine 334.

Belongs to the queuine tRNA-ribosyltransferase family. As to quaternary structure, homodimer. Within each dimer, one monomer is responsible for RNA recognition and catalysis, while the other monomer binds to the replacement base PreQ1. The cofactor is Zn(2+).

The catalysed reaction is 7-aminomethyl-7-carbaguanine + guanosine(34) in tRNA = 7-aminomethyl-7-carbaguanosine(34) in tRNA + guanine. Its pathway is tRNA modification; tRNA-queuosine biosynthesis. Its function is as follows. Catalyzes the base-exchange of a guanine (G) residue with the queuine precursor 7-aminomethyl-7-deazaguanine (PreQ1) at position 34 (anticodon wobble position) in tRNAs with GU(N) anticodons (tRNA-Asp, -Asn, -His and -Tyr). Catalysis occurs through a double-displacement mechanism. The nucleophile active site attacks the C1' of nucleotide 34 to detach the guanine base from the RNA, forming a covalent enzyme-RNA intermediate. The proton acceptor active site deprotonates the incoming PreQ1, allowing a nucleophilic attack on the C1' of the ribose to form the product. After dissociation, two additional enzymatic reactions on the tRNA convert PreQ1 to queuine (Q), resulting in the hypermodified nucleoside queuosine (7-(((4,5-cis-dihydroxy-2-cyclopenten-1-yl)amino)methyl)-7-deazaguanosine). This chain is Queuine tRNA-ribosyltransferase, found in Acinetobacter baumannii (strain AB307-0294).